Reading from the N-terminus, the 316-residue chain is Homoserine O-succinyltransferase (316 aa).

The active-site Acyl-thioester intermediate is cysteine 142. Substrate-binding residues include lysine 163 and serine 192. Residue histidine 235 is the Proton acceptor of the active site. Residue glutamate 237 is part of the active site. Arginine 249 contributes to the substrate binding site.

Belongs to the MetA family.

It localises to the cytoplasm. It catalyses the reaction L-homoserine + succinyl-CoA = O-succinyl-L-homoserine + CoA. The protein operates within amino-acid biosynthesis; L-methionine biosynthesis via de novo pathway; O-succinyl-L-homoserine from L-homoserine: step 1/1. In terms of biological role, transfers a succinyl group from succinyl-CoA to L-homoserine, forming succinyl-L-homoserine. The polypeptide is Homoserine O-succinyltransferase (Shewanella amazonensis (strain ATCC BAA-1098 / SB2B)).